The chain runs to 334 residues: Putative 2-hydroxyacid dehydrogenase UNK4.10 (334 aa).

NAD(+) is bound by residues 166–167 (GI), 244–246 (TAR), and Asp270. Arg246 is an active-site residue. Residue Glu275 is part of the active site. Catalysis depends on His293, which acts as the Proton donor. NAD(+) is bound at residue 293–296 (HLGT).

This sequence belongs to the D-isomer specific 2-hydroxyacid dehydrogenase family.

The sequence is that of Putative 2-hydroxyacid dehydrogenase UNK4.10 from Schizosaccharomyces pombe (strain 972 / ATCC 24843) (Fission yeast).